The primary structure comprises 443 residues: Probable glycine dehydrogenase (decarboxylating) subunit 1 (443 aa).

Belongs to the GcvP family. N-terminal subunit subfamily. In terms of assembly, the glycine cleavage system is composed of four proteins: P, T, L and H. In this organism, the P 'protein' is a heterodimer of two subunits.

It carries out the reaction N(6)-[(R)-lipoyl]-L-lysyl-[glycine-cleavage complex H protein] + glycine + H(+) = N(6)-[(R)-S(8)-aminomethyldihydrolipoyl]-L-lysyl-[glycine-cleavage complex H protein] + CO2. The glycine cleavage system catalyzes the degradation of glycine. The P protein binds the alpha-amino group of glycine through its pyridoxal phosphate cofactor; CO(2) is released and the remaining methylamine moiety is then transferred to the lipoamide cofactor of the H protein. The protein is Probable glycine dehydrogenase (decarboxylating) subunit 1 of Chlorobium limicola (strain DSM 245 / NBRC 103803 / 6330).